A 248-amino-acid polypeptide reads, in one-letter code: Protein LIFEGUARD 3 (248 aa).

Helical transmembrane passes span 42–62 (VYSI…TVVT), 74–94 (GLGL…LCPL), 105–125 (YLLL…TCAF), 130–150 (VILE…LYTF), 165–185 (FLFG…LFPL), 188–208 (VSVM…IVYD), and 222–242 (IWAA…LLTV).

It belongs to the BI1 family.

The protein localises to the membrane. This chain is Protein LIFEGUARD 3, found in Arabidopsis thaliana (Mouse-ear cress).